The following is a 417-amino-acid chain: L-rhamnose isomerase (417 aa).

Mn(2+)-binding residues include H261, D293, and D295.

It belongs to the rhamnose isomerase family. Mn(2+) is required as a cofactor.

The protein localises to the cytoplasm. The enzyme catalyses L-rhamnopyranose = L-rhamnulose. It functions in the pathway carbohydrate degradation; L-rhamnose degradation; glycerone phosphate from L-rhamnose: step 1/3. Functionally, catalyzes the interconversion of L-rhamnose and L-rhamnulose. This Oceanobacillus iheyensis (strain DSM 14371 / CIP 107618 / JCM 11309 / KCTC 3954 / HTE831) protein is L-rhamnose isomerase.